The sequence spans 1530 residues: Coiled-coil domain-containing protein 141 (1530 aa).

Residues 49-127 (NLLEIGSSQD…SMLERRRELL (79 aa)) form a Spectrin repeat. At T91 the chain carries Phosphothreonine. 3 coiled-coil regions span residues 220 to 251 (IDSL…VLQL), 758 to 785 (LKEK…YEEI), and 865 to 967 (AKSL…VNKK). 4 disordered regions span residues 1153 to 1240 (SEER…PASS), 1259 to 1285 (LGKA…DTFT), 1324 to 1356 (PREV…SNVT), and 1369 to 1403 (SPGL…SVVS). Polar residues predominate over residues 1334–1345 (PSSQAQEISLGT). The 89-residue stretch at 1409–1497 (PHFSRLLSNV…GTLSSKAILH (89 aa)) folds into the Ig-like domain.

Interacts with DISC1. Interacts preferentially with phosphorylated forms of myosin regulatory light chain (MRLC). Interacts (via the N-terminal region) with HDAC6; inhibits the deacetylase activity of HDAC6. Interacts with KIBRA (via the C-terminal region); retains AMPAR in the cytosol after internalization. In terms of processing, ubiquitinated and degradated by the CDC20-APC/C pathway. During brain development, CDC20-APC/C complex degrades CCDC141 after centrosome translocation into the dilated area. CCDC141 is restabilized in the dilation until the centrosome enters the dilation, at which point it is once again immediately destabilized by CDC20-APC/C complex. The oscillatory regulation of CCDC141 protein is needed for proper cortical migration. Phosphorylation at Thr-91 by PLK1 affects CCDC141 degradation.

It localises to the cytoplasm. It is found in the cytoskeleton. Its subcellular location is the microtubule organizing center. The protein resides in the centrosome. Its function is as follows. Plays a critical role in cortical radial and GnRH neurons migration during brain development. Regulates cortical radial migration by negatively controlling the activity of histone deacetylase 6 (HDAC6) and promotes centrosome maturation. CAMDI is required for dilation formation of cortical neurons during radial migration. Plays a critical role in learning and memory performance through regulation of AMPA-selective glutamate receptors (AMPARs) cell surface expression in competition with KIBRA. The polypeptide is Coiled-coil domain-containing protein 141 (Rattus norvegicus (Rat)).